The primary structure comprises 197 residues: uncharacterized protein (197 aa).

A signal peptide spans 1–23; that stretch reads MSARAPKELRLALPPCLLNRTFA. N-linked (GlcNAc...) asparagine glycans are attached at residues asparagine 19 and asparagine 26. At 24–61 the chain is on the extracellular side; that stretch reads SPNASGSGNTGARGPGAGGSGTCITQVGQQLFQSFSST. A helical membrane pass occupies residues 62–82; the sequence is LVLIVLVTLIFCLIVLSLSTF. Residues 83–197 lie on the Cytoplasmic side of the membrane; sequence HIHKRRMKKR…EGLLQTVVLS (115 aa). The disordered stretch occupies residues 94 to 180; the sequence is MQRAQEEYER…SSPQGAHAAS (87 aa). Composition is skewed to basic and acidic residues over residues 96–107 and 125–136; these read RAQEEYERDHCS and HTKETRLERQPR. Residues 147–161 are compositionally biased toward low complexity; sequence SSSSSSSPGLLCQGP. Residues 162–171 are compositionally biased toward pro residues; it reads CAPPPPPPAS.

It localises to the membrane. This is an uncharacterized protein from Macaca fascicularis (Crab-eating macaque).